Here is a 268-residue protein sequence, read N- to C-terminus: Transcription initiation factor TFIID subunit 14b (268 aa).

A compositionally biased stretch (polar residues) spans 1–20 (MTNSSSSKKQAQDQPETSEP). The disordered stretch occupies residues 1-36 (MTNSSSSKKQAQDQPETSEPTLKSLKTKMTKSDEKQ). In terms of domain architecture, YEATS spans 38–182 (KLKDIEISVP…ESFLARVQNH (145 aa)). Positions 229–263 (DELLQLAAARQQVQAHIAKLRRQISLLEGQNQTVK) form a coiled coil.

The protein belongs to the YAF9 family. Component of the TFIID complex. TFIID is composed of TATA binding protein (TBP) and a number of TBP-associated factors (TAFs) whose MWs range from 14-217 kDa. Interacts with TAF1, TAF4B and TAF12B. Component of the SWR1 chromatin-remodeling complex. Interacts with FLX, a component of the transcription activator complex FRI-C. Interacts with SWC4, and with EAF1A and EAF1B (via HSA domain). As to expression, expressed in roots, leaves, inflorescence and flowering tissues.

The protein resides in the cytoplasm. The protein localises to the nucleus. Negative regulator of flowering controlling the H4K5 acetylation levels in the FLC and FT chromatin. Positively regulates FLC expression. Component of the transcription factor IID (TFIID) complex that is essential for mediating regulation of RNA polymerase transcription. Component of the SWR1 complex which mediates the ATP-dependent exchange of histone H2A for the H2A variant HZT1 leading to transcriptional regulation of selected genes by chromatin remodeling. Component of a NuA4 histone acetyltransferase complex which is involved in transcriptional activation of selected genes principally by acetylation of nucleosomal histones H4 and H2A. The chain is Transcription initiation factor TFIID subunit 14b from Arabidopsis thaliana (Mouse-ear cress).